Reading from the N-terminus, the 357-residue chain is MEENKQRVKSMINILQLVAPGTPLREGIDNVLRAQTGGLIVLGYNEQIKSIVDGGFHINCAFSPASLYELAKMDGALILNETGSKILIANAQLVPEASIDSIETGMRHRTAERVAKQTGSLVVAISQRRNVITLYQGNLRYTLKDIGVILTKANQAIQTLEKYKAVWNDGITNLGILEFEEVVTMSEVVHVLHSVEMVLRIKNEILSYIHELGTEGRLIRLQLTELLADLEAEAALLIKDYHQEKTQDHHQILKKLQDLANTQLLEDSDLVKLLGYPGQTSLEESVTPRGYRITSKISRVPPLIIENLINRFKTLQGVCRATIHELDDVEGIGEVRAKKIREGLKRIQEHLYMSRHN.

A DAC domain is found at 8–146; that stretch reads VKSMINILQL…GNLRYTLKDI (139 aa). ATP is bound by residues G75, L93, and 106-110; that span reads MRHRT.

Belongs to the DisA family. In terms of assembly, homooctamer. Requires Mg(2+) as cofactor.

The enzyme catalyses 2 ATP = 3',3'-c-di-AMP + 2 diphosphate. In terms of biological role, participates in a DNA-damage check-point that is active prior to asymmetric division when DNA is damaged. DisA forms globular foci that rapidly scan along the chromosomes during sporulation, searching for lesions. When a lesion is present, DisA pauses at the lesion site. This triggers a cellular response that culminates in a temporary block in sporulation initiation. Its function is as follows. Also has diadenylate cyclase activity, catalyzing the condensation of 2 ATP molecules into cyclic di-AMP (c-di-AMP). c-di-AMP acts as a signaling molecule that couples DNA integrity with progression of sporulation. The rise in c-di-AMP level generated by DisA while scanning the chromosome, operates as a positive signal that advances sporulation; upon encountering a lesion, the DisA focus arrests at the damaged site and halts c-di-AMP synthesis. This is DNA integrity scanning protein DisA from Bacillus cereus (strain G9842).